We begin with the raw amino-acid sequence, 462 residues long: ATP synthase subunit beta (462 aa).

150–157 (GGAGVGKT) serves as a coordination point for ATP.

This sequence belongs to the ATPase alpha/beta chains family. As to quaternary structure, F-type ATPases have 2 components, CF(1) - the catalytic core - and CF(0) - the membrane proton channel. CF(1) has five subunits: alpha(3), beta(3), gamma(1), delta(1), epsilon(1). CF(0) has three main subunits: a(1), b(2) and c(9-12). The alpha and beta chains form an alternating ring which encloses part of the gamma chain. CF(1) is attached to CF(0) by a central stalk formed by the gamma and epsilon chains, while a peripheral stalk is formed by the delta and b chains.

The protein localises to the cell membrane. It catalyses the reaction ATP + H2O + 4 H(+)(in) = ADP + phosphate + 5 H(+)(out). In terms of biological role, produces ATP from ADP in the presence of a proton gradient across the membrane. The catalytic sites are hosted primarily by the beta subunits. The protein is ATP synthase subunit beta of Wigglesworthia glossinidia brevipalpis.